A 217-amino-acid chain; its full sequence is 3-dehydroquinate dehydratase (217 aa).

3-dehydroquinate contacts are provided by residues 26–28 (EFR) and Arg-59. Residue His-114 is the Proton donor/acceptor of the active site. The active-site Schiff-base intermediate with substrate is Lys-140. 3-dehydroquinate is bound by residues Arg-178 and Gln-201.

It belongs to the type-I 3-dehydroquinase family. As to quaternary structure, homodimer.

It carries out the reaction 3-dehydroquinate = 3-dehydroshikimate + H2O. Its pathway is metabolic intermediate biosynthesis; chorismate biosynthesis; chorismate from D-erythrose 4-phosphate and phosphoenolpyruvate: step 3/7. Its function is as follows. Involved in the third step of the chorismate pathway, which leads to the biosynthesis of aromatic amino acids. Catalyzes the cis-dehydration of 3-dehydroquinate (DHQ) and introduces the first double bond of the aromatic ring to yield 3-dehydroshikimate. This is 3-dehydroquinate dehydratase from Hydrogenobaculum sp. (strain Y04AAS1).